The sequence spans 356 residues: Cobalt-precorrin-5B C(1)-methyltransferase (356 aa).

Belongs to the CbiD family.

It carries out the reaction Co-precorrin-5B + S-adenosyl-L-methionine = Co-precorrin-6A + S-adenosyl-L-homocysteine. It participates in cofactor biosynthesis; adenosylcobalamin biosynthesis; cob(II)yrinate a,c-diamide from sirohydrochlorin (anaerobic route): step 6/10. Functionally, catalyzes the methylation of C-1 in cobalt-precorrin-5B to form cobalt-precorrin-6A. This chain is Cobalt-precorrin-5B C(1)-methyltransferase, found in Geobacter sp. (strain M21).